A 177-amino-acid polypeptide reads, in one-letter code: Large ribosomal subunit protein bL19 (177 aa).

This sequence belongs to the bacterial ribosomal protein bL19 family.

Functionally, this protein is located at the 30S-50S ribosomal subunit interface and may play a role in the structure and function of the aminoacyl-tRNA binding site. This chain is Large ribosomal subunit protein bL19, found in Sinorhizobium medicae (strain WSM419) (Ensifer medicae).